The primary structure comprises 232 residues: Ribose-5-phosphate isomerase A (232 aa).

Residues 31-34 (TGST), 88-91 (DGAD), and 101-104 (KGGG) contribute to the substrate site. The Proton acceptor role is filled by Glu-110. A substrate-binding site is contributed by Lys-128.

The protein belongs to the ribose 5-phosphate isomerase family. In terms of assembly, homodimer.

The catalysed reaction is aldehydo-D-ribose 5-phosphate = D-ribulose 5-phosphate. Its pathway is carbohydrate degradation; pentose phosphate pathway; D-ribose 5-phosphate from D-ribulose 5-phosphate (non-oxidative stage): step 1/1. Its function is as follows. Catalyzes the reversible conversion of ribose-5-phosphate to ribulose 5-phosphate. The protein is Ribose-5-phosphate isomerase A of Lactobacillus gasseri (strain ATCC 33323 / DSM 20243 / BCRC 14619 / CIP 102991 / JCM 1131 / KCTC 3163 / NCIMB 11718 / NCTC 13722 / AM63).